Here is a 201-residue protein sequence, read N- to C-terminus: 3-isopropylmalate dehydratase small subunit (201 aa).

The protein belongs to the LeuD family. LeuD type 1 subfamily. In terms of assembly, heterodimer of LeuC and LeuD.

It carries out the reaction (2R,3S)-3-isopropylmalate = (2S)-2-isopropylmalate. It functions in the pathway amino-acid biosynthesis; L-leucine biosynthesis; L-leucine from 3-methyl-2-oxobutanoate: step 2/4. Its function is as follows. Catalyzes the isomerization between 2-isopropylmalate and 3-isopropylmalate, via the formation of 2-isopropylmaleate. This is 3-isopropylmalate dehydratase small subunit from Salmonella paratyphi A (strain ATCC 9150 / SARB42).